Here is a 365-residue protein sequence, read N- to C-terminus: Phospho-N-acetylmuramoyl-pentapeptide-transferase (365 aa).

10 helical membrane passes run Tyr-22–Gly-42, Thr-74–Leu-94, Ser-95–Phe-115, Lys-134–Ser-154, Leu-169–Ser-189, Gly-201–Gln-221, Leu-240–Phe-260, Phe-268–Ile-288, Leu-292–Val-312, and Lys-342–Ile-362.

It belongs to the glycosyltransferase 4 family. MraY subfamily. The cofactor is Mg(2+).

The protein resides in the cell inner membrane. It catalyses the reaction UDP-N-acetyl-alpha-D-muramoyl-L-alanyl-gamma-D-glutamyl-meso-2,6-diaminopimeloyl-D-alanyl-D-alanine + di-trans,octa-cis-undecaprenyl phosphate = di-trans,octa-cis-undecaprenyl diphospho-N-acetyl-alpha-D-muramoyl-L-alanyl-D-glutamyl-meso-2,6-diaminopimeloyl-D-alanyl-D-alanine + UMP. It participates in cell wall biogenesis; peptidoglycan biosynthesis. In terms of biological role, catalyzes the initial step of the lipid cycle reactions in the biosynthesis of the cell wall peptidoglycan: transfers peptidoglycan precursor phospho-MurNAc-pentapeptide from UDP-MurNAc-pentapeptide onto the lipid carrier undecaprenyl phosphate, yielding undecaprenyl-pyrophosphoryl-MurNAc-pentapeptide, known as lipid I. In Francisella philomiragia subsp. philomiragia (strain ATCC 25017 / CCUG 19701 / FSC 153 / O#319-036), this protein is Phospho-N-acetylmuramoyl-pentapeptide-transferase.